We begin with the raw amino-acid sequence, 281 residues long: Putative zinc-binding protein ORF11 (281 aa).

This Ictaluridae (bullhead catfishes) protein is Putative zinc-binding protein ORF11 (ORF11).